The chain runs to 367 residues: Alpha-2-HS-glycoprotein (367 aa).

Residues 1–18 (MKSLVLLLCLAQLWGCHS) form the signal peptide. The Cystatin fetuin-A-type 1 domain maps to 27–133 (YRQPNCDDPE…KFSVVYAKCD (107 aa)). 6 cysteine pairs are disulfide-bonded: cysteine 32/cysteine 358, cysteine 89/cysteine 100, cysteine 114/cysteine 132, cysteine 146/cysteine 149, cysteine 208/cysteine 219, and cysteine 230/cysteine 247. Serine 134 bears the Phosphoserine mark. Residues serine 135 and serine 138 each carry the phosphoserine; by FAM20C modification. Residues 144–255 (KVCQDCPLLA…TCMVFQTQPV (112 aa)) enclose the Cystatin fetuin-A-type 2 domain. 2 N-linked (GlcNAc...) (complex) asparagine glycosylation sites follow: asparagine 156 and asparagine 176. Positions 255–298 (VSSQPQPEGANEAVPTPVVDPDAPPSPPLGAPGLPPAGSPPDSH) are disordered. O-linked (GalNAc...) threonine glycosylation occurs at threonine 270. The span at 276 to 293 (DAPPSPPLGAPGLPPAGS) shows a compositional bias: pro residues. O-linked (GalNAc...) serine glycans are attached at residues serine 280 and serine 293. Residues 301–340 (LAAPPGHQLHRAHYDLRHTFMGVVSLGSPSGEVSHPRKTR) constitute a propeptide, connecting peptide. A Phosphothreonine; by FAM20C modification is found at threonine 319. Phosphoserine; by FAM20C occurs at positions 325, 328, and 330. O-linked (GalNAc...) threonine glycosylation is found at threonine 339 and threonine 341. An O-linked (GalNAc...) serine glycan is attached at serine 346.

Belongs to the fetuin family. In terms of assembly, alpha-2-HS glycoprotein derives from this precursor, when the connecting peptide is cleaved off. The two chains A and B are held together by a single disulfide bond. In terms of processing, phosphorylated by FAM20C in the extracellular medium. Post-translationally, O- and N-glycosylated. O-glycosylated with core 1 or possibly core 8 glycans. N-glycan at Asn-156: Hex5HexNAc4; N-glycan heterogeneity at Asn-176: Hex5HexNAc4 (major) and Hex6HexNAc5 (minor). Synthesized in liver and selectively concentrated in bone matrix. Secreted in plasma. It is also found in dentin in much higher quantities than other plasma proteins.

It is found in the secreted. Promotes endocytosis, possesses opsonic properties and influences the mineral phase of bone. Shows affinity for calcium and barium ions. The chain is Alpha-2-HS-glycoprotein (AHSG) from Homo sapiens (Human).